Here is a 540-residue protein sequence, read N- to C-terminus: Chaperonin GroEL (540 aa).

ATP is bound by residues 30–33 (TLGP), 87–91 (DGTTT), Gly-414, 479–481 (NAL), and Asp-495.

This sequence belongs to the chaperonin (HSP60) family. As to quaternary structure, forms a cylinder of 14 subunits composed of two heptameric rings stacked back-to-back. Interacts with the co-chaperonin GroES.

It localises to the cytoplasm. It carries out the reaction ATP + H2O + a folded polypeptide = ADP + phosphate + an unfolded polypeptide.. In terms of biological role, together with its co-chaperonin GroES, plays an essential role in assisting protein folding. The GroEL-GroES system forms a nano-cage that allows encapsulation of the non-native substrate proteins and provides a physical environment optimized to promote and accelerate protein folding. The chain is Chaperonin GroEL from Rubrobacter xylanophilus (strain DSM 9941 / JCM 11954 / NBRC 16129 / PRD-1).